The chain runs to 473 residues: Vasculin-like protein 1 (473 aa).

The span at 14 to 25 shows a compositional bias: polar residues; it reads STPQSSKSSTAT. The disordered stretch occupies residues 14-55; sequence STPQSSKSSTATFDKHGEHLSRGEGRFGISRRRHNSSDGFFN. The span at 26 to 38 shows a compositional bias: basic and acidic residues; that stretch reads FDKHGEHLSRGEG. Phosphoserine occurs at positions 49 and 76. Disordered stretches follow at residues 88-127 and 155-189; these read GTTG…RKGC and DFPS…AKQP. A compositionally biased stretch (polar residues) spans 103–112; sequence SQRSGGSSTG. Residues 113 to 125 show a composition bias toward basic residues; the sequence is NHRHWNGSFHSRK. Phosphoserine is present on S199. Disordered stretches follow at residues 235 to 267 and 281 to 316; these read LVPK…SRES and LAAG…RRTT. S289 is modified (phosphoserine). Positions 292-309 are enriched in low complexity; it reads ESPSSTTPPIEISSSRLT. T298 is subject to Phosphothreonine. A Phosphoserine modification is found at S381. A disordered region spans residues 453-473; sequence ECEDSDSETSSSQTSDDDAWK.

The protein belongs to the vasculin family.

The protein localises to the nucleus. In terms of biological role, possible transcription factor. The protein is Vasculin-like protein 1 (Gpbp1l1) of Mus musculus (Mouse).